The primary structure comprises 352 residues: MVKGLELFEVPRQVVFGPNAIGKVSEVLTYLGLRRGLIITGHIHSRHIASKVSEQCVDCQIISDDEIELSDVVKGMSAFSDVDFIAGVGGGRVIDVSKVIAYKLNKHLISIPTVASHDGIASPYISFLMQDDLNKLGVGKVRKTPLAIIVDTGIVAEAPRVFLLAGIGELLGKKVALMDWRLGHRIKGEDYSESAAMLALSSHMIIMNNVNKLTRHGEEETRIVVKALLGCGVAMAIAGSTRPCSGSEHLFSHSLDLLAREYGVKQAMHGMQVALSSVIMLYLHGANWRRIIKIMKMLGLPTSFKELGYDKELVVEALMNAHRIRPDRYTILGSNGLTREAAEAALEQTGVI.

NAD(+)-binding positions include 91-95 (GRVID) and 113-116 (TVAS). Residue Asp-118 participates in substrate binding. NAD(+) is bound at residue Ser-122. Glu-169 provides a ligand contact to substrate. Zn(2+)-binding residues include Glu-169 and His-249. His-253 contributes to the substrate binding site. His-269 contacts Zn(2+).

The protein belongs to the glycerol-1-phosphate dehydrogenase family. As to quaternary structure, homodimer. It depends on Zn(2+) as a cofactor.

The protein resides in the cytoplasm. The enzyme catalyses sn-glycerol 1-phosphate + NAD(+) = dihydroxyacetone phosphate + NADH + H(+). The catalysed reaction is sn-glycerol 1-phosphate + NADP(+) = dihydroxyacetone phosphate + NADPH + H(+). It functions in the pathway membrane lipid metabolism; glycerophospholipid metabolism. In terms of biological role, catalyzes the NAD(P)H-dependent reduction of dihydroxyacetonephosphate (DHAP or glycerone phosphate) to glycerol 1-phosphate (G1P). The G1P thus generated is used as the glycerophosphate backbone of phospholipids in the cellular membranes of Archaea. In Caldivirga maquilingensis (strain ATCC 700844 / DSM 13496 / JCM 10307 / IC-167), this protein is Glycerol-1-phosphate dehydrogenase [NAD(P)+].